The following is a 206-amino-acid chain: Large ribosomal subunit protein uL4 (206 aa).

The protein belongs to the universal ribosomal protein uL4 family. Part of the 50S ribosomal subunit.

Functionally, one of the primary rRNA binding proteins, this protein initially binds near the 5'-end of the 23S rRNA. It is important during the early stages of 50S assembly. It makes multiple contacts with different domains of the 23S rRNA in the assembled 50S subunit and ribosome. Forms part of the polypeptide exit tunnel. The chain is Large ribosomal subunit protein uL4 from Rhodopseudomonas palustris (strain HaA2).